We begin with the raw amino-acid sequence, 365 residues long: Peptide chain release factor 2 (365 aa).

Position 252 is an N5-methylglutamine (Gln-252).

Belongs to the prokaryotic/mitochondrial release factor family. In terms of processing, methylated by PrmC. Methylation increases the termination efficiency of RF2.

It is found in the cytoplasm. Peptide chain release factor 2 directs the termination of translation in response to the peptide chain termination codons UGA and UAA. The polypeptide is Peptide chain release factor 2 (Pasteurella multocida (strain Pm70)).